We begin with the raw amino-acid sequence, 531 residues long: MSSLRLEENRKLATAAAVCPLSNCQFSGVVISAIADEQKLEFANKYRGSCTLLCSYDSQGVVLRIVADDDRSHVLKEYMISADTDAAQMGRRSYAVSLESDNLVLRFASEQDQQLFRKVVENVKHLRPKSVFSQRTEESSASQYFQFYGYLSQQQNMMQDYVRTSTYQRAILGNSIDFQDKIVLDVGAGSGILSFFAVQAGAAKVYAIEASNMAQYAQQLVESNNVQHKISVIPGKIEEIELPEKVDVIISEPMGYMLYNERMLETYLHARKWLKPQGKMFPTHGDLHIAPFSDESLYSEQYNKANFWYQSAFHGVDLTTLHKEGMKEYFRQPIVDTFDIRICMAKSVRHVCDFLNDKEDDLHVIDIPLEFHILQTGICHGLAFWFDVEFSGTTQNVWLSTSPTAPLTHWYQVRCLLPMPIFIKQGQTLTGRVLLEANRRQSYDVTIDLHIEGTLISSSNTLDLKNPYFRYTGAPVQAPPGTSTQSPSEQYWTQVDSQGSRNSSSMLNGTISVNGMGDGSMDITHGLMHPH.

The region spanning 141–450 is the SAM-dependent MTase PRMT-type domain; that stretch reads ASQYFQFYGY…QSYDVTIDLH (310 aa). S-adenosyl-L-methionine contacts are provided by glutamine 154, arginine 163, glycine 187, glutamate 209, glutamate 238, and threonine 266. Asymmetric dimethylarginine; by autocatalysis is present on arginine 501.

Belongs to the class I-like SAM-binding methyltransferase superfamily. Protein arginine N-methyltransferase family. As to quaternary structure, homodimer. Post-translationally, the dimethylated protein is the major form.

It localises to the cytoplasm. The protein resides in the nucleus. It catalyses the reaction L-arginyl-[protein] + 2 S-adenosyl-L-methionine = N(omega),N(omega)-dimethyl-L-arginyl-[protein] + 2 S-adenosyl-L-homocysteine + 2 H(+). In terms of biological role, methylates (mono- and asymmetric dimethylation) the guanidino nitrogens of arginyl residues in proteins. May methylate histone H3 at 'Arg-17' and activate transcription via chromatin remodeling. This chain is Histone-arginine methyltransferase CARMER (Art4), found in Drosophila ananassae (Fruit fly).